The primary structure comprises 73 residues: Putative defensin-like protein 270 (73 aa).

Residues methionine 1–serine 23 form the signal peptide. 4 cysteine pairs are disulfide-bonded: cysteine 33–cysteine 72, cysteine 39–cysteine 60, cysteine 45–cysteine 70, and cysteine 49–cysteine 71.

This sequence belongs to the DEFL family.

It localises to the secreted. The sequence is that of Putative defensin-like protein 270 from Arabidopsis thaliana (Mouse-ear cress).